The chain runs to 337 residues: Cytoskeleton protein RodZ (337 aa).

The Cytoplasmic portion of the chain corresponds to Met-1–Gly-111. Residues Leu-19–Leu-71 enclose the HTH cro/C1-type domain. Residues Gln-30–Glu-49 constitute a DNA-binding region (H-T-H motif). The chain crosses the membrane as a helical; Signal-anchor for type II membrane protein span at residues Trp-112 to Trp-132. At Trp-133–Gln-337 the chain is on the periplasmic side. Residues Asn-155–Ala-220 are disordered. A compositionally biased stretch (polar residues) spans Ser-160–Val-192. Residues Pro-193 to Pro-217 show a composition bias toward low complexity.

It belongs to the RodZ family.

It is found in the cell inner membrane. Cytoskeletal protein that is involved in cell-shape control through regulation of the length of the long axis. This is Cytoskeleton protein RodZ from Citrobacter koseri (strain ATCC BAA-895 / CDC 4225-83 / SGSC4696).